The following is a 305-amino-acid chain: Sulfate adenylyltransferase subunit 2 (305 aa).

It belongs to the PAPS reductase family. CysD subfamily. As to quaternary structure, heterodimer composed of CysD, the smaller subunit, and CysN.

It carries out the reaction sulfate + ATP + H(+) = adenosine 5'-phosphosulfate + diphosphate. It participates in sulfur metabolism; hydrogen sulfide biosynthesis; sulfite from sulfate: step 1/3. In terms of biological role, with CysN forms the ATP sulfurylase (ATPS) that catalyzes the adenylation of sulfate producing adenosine 5'-phosphosulfate (APS) and diphosphate, the first enzymatic step in sulfur assimilation pathway. APS synthesis involves the formation of a high-energy phosphoric-sulfuric acid anhydride bond driven by GTP hydrolysis by CysN coupled to ATP hydrolysis by CysD. In Pseudomonas entomophila (strain L48), this protein is Sulfate adenylyltransferase subunit 2.